A 208-amino-acid chain; its full sequence is N-(5'-phosphoribosyl)anthranilate isomerase (208 aa).

The protein belongs to the TrpF family.

The catalysed reaction is N-(5-phospho-beta-D-ribosyl)anthranilate = 1-(2-carboxyphenylamino)-1-deoxy-D-ribulose 5-phosphate. Its pathway is amino-acid biosynthesis; L-tryptophan biosynthesis; L-tryptophan from chorismate: step 3/5. In Lactiplantibacillus plantarum (strain ATCC BAA-793 / NCIMB 8826 / WCFS1) (Lactobacillus plantarum), this protein is N-(5'-phosphoribosyl)anthranilate isomerase.